The chain runs to 72 residues: Metallothionein-like protein 1 (72 aa).

The protein belongs to the metallothionein superfamily. Type 15 family.

In terms of biological role, metallothioneins have a high content of cysteine residues that bind various heavy metals. The chain is Metallothionein-like protein 1 from Erythranthe guttata (Yellow monkey flower).